Consider the following 329-residue polypeptide: 4-hydroxythreonine-4-phosphate dehydrogenase (329 aa).

Substrate is bound by residues histidine 136 and threonine 137. 3 residues coordinate a divalent metal cation: histidine 166, histidine 211, and histidine 266. Positions 274, 283, and 292 each coordinate substrate.

It belongs to the PdxA family. As to quaternary structure, homodimer. Zn(2+) serves as cofactor. Mg(2+) is required as a cofactor. Requires Co(2+) as cofactor.

Its subcellular location is the cytoplasm. It carries out the reaction 4-(phosphooxy)-L-threonine + NAD(+) = 3-amino-2-oxopropyl phosphate + CO2 + NADH. It participates in cofactor biosynthesis; pyridoxine 5'-phosphate biosynthesis; pyridoxine 5'-phosphate from D-erythrose 4-phosphate: step 4/5. Functionally, catalyzes the NAD(P)-dependent oxidation of 4-(phosphooxy)-L-threonine (HTP) into 2-amino-3-oxo-4-(phosphooxy)butyric acid which spontaneously decarboxylates to form 3-amino-2-oxopropyl phosphate (AHAP). This Pseudomonas putida (strain ATCC 47054 / DSM 6125 / CFBP 8728 / NCIMB 11950 / KT2440) protein is 4-hydroxythreonine-4-phosphate dehydrogenase.